A 117-amino-acid chain; its full sequence is MKHLWFFLLLVAAPRWVLSQVQLQESGPGLVKPSGTLSLTCAVSGGSISSSNWWSWVRQPPGKGLEWIGEIYHSGSTNYNPSLKSRVTISVDKSKNQFSLKLSSVTAADTAVYYCAR.

An N-terminal signal peptide occupies residues 1 to 19 (MKHLWFFLLLVAAPRWVLS). The interval 20–44 (QVQLQESGPGLVKPSGTLSLTCAVS) is framework-1. In terms of domain architecture, Ig-like spans 20-117 (QVQLQESGPG…ADTAVYYCAR (98 aa)). An intrachain disulfide couples Cys41 to Cys115. A complementarity-determining-1 region spans residues 45–53 (GGSISSSNW). The interval 54-70 (WSWVRQPPGKGLEWIGE) is framework-2. The complementarity-determining-2 stretch occupies residues 71–77 (IYHSGST). The tract at residues 78-115 (NYNPSLKSRVTISVDKSKNQFSLKLSSVTAADTAVYYC) is framework-3. The interval 116–117 (AR) is complementarity-determining-3.

In terms of assembly, immunoglobulins are composed of two identical heavy chains and two identical light chains; disulfide-linked.

The protein localises to the secreted. It localises to the cell membrane. Functionally, v region of the variable domain of immunoglobulin heavy chains that participates in the antigen recognition. Immunoglobulins, also known as antibodies, are membrane-bound or secreted glycoproteins produced by B lymphocytes. In the recognition phase of humoral immunity, the membrane-bound immunoglobulins serve as receptors which, upon binding of a specific antigen, trigger the clonal expansion and differentiation of B lymphocytes into immunoglobulins-secreting plasma cells. Secreted immunoglobulins mediate the effector phase of humoral immunity, which results in the elimination of bound antigens. The antigen binding site is formed by the variable domain of one heavy chain, together with that of its associated light chain. Thus, each immunoglobulin has two antigen binding sites with remarkable affinity for a particular antigen. The variable domains are assembled by a process called V-(D)-J rearrangement and can then be subjected to somatic hypermutations which, after exposure to antigen and selection, allow affinity maturation for a particular antigen. In Homo sapiens (Human), this protein is Immunoglobulin heavy variable 4-4.